The primary structure comprises 83 residues: Small ribosomal subunit protein uS17 (83 aa).

The protein belongs to the universal ribosomal protein uS17 family. Part of the 30S ribosomal subunit.

Functionally, one of the primary rRNA binding proteins, it binds specifically to the 5'-end of 16S ribosomal RNA. This chain is Small ribosomal subunit protein uS17, found in Francisella philomiragia subsp. philomiragia (strain ATCC 25017 / CCUG 19701 / FSC 153 / O#319-036).